A 205-amino-acid polypeptide reads, in one-letter code: MDHAPERFDATPPAGEPDRPALGVLELTSIARGITVADAALKRAPSLLLMSRPVSSGKHLLMMRGQVAEVEESMIAAREIAGAGSGALLDELELPYAHEQLWRFLDAPVVADAWEEDTESVIIVETATVCAAIDSADAALKTAPVVLRDMRLAIGIAGKAFFTLTGELADVEAAAEVVRERCGARLLELACIARPVDELRGRLFF.

The tract at residues 1 to 20 is disordered; that stretch reads MDHAPERFDATPPAGEPDRP. 2 consecutive BMC domains span residues 21–106 and 120–204; these read ALGV…RFLD and SVII…GRLF.

It belongs to the bacterial microcompartments protein family. As to quaternary structure, homotrimerizes to form a pseudohexamer. Unlike its paralogs BMC-T2 and BMC-T3, the pseudohexamers do not stack. The concave side faces outward, with the N- and C-terminii exposed to the cytoplasm.

The protein localises to the bacterial microcompartment. A minor component of the bacterial microcompartment (BMC) shell. Expression of 5 proteins in E.coli (BMC-H (Hoch_5815), BMC-P (Hoch_5814), and 3 BMC-T (Hoch_5812, Hoch_5816, Hoch_3341)) forms 40 nm artificial BMCs with a molecular mass of 6.5 MDa. This protein does not form stacked pseudohexamers in the BMC. There are 20 BMC-T pseudohexamers per BMC, composed of mixed BMC-T1, BMC-T2 and BMC-T3. The shell facets are 20-30 Angstroms thick, with 1 of BMC-T trimers protruding to the exterior. The sequence is that of Bacterial microcompartment protein trimer-1 from Haliangium ochraceum (strain DSM 14365 / JCM 11303 / SMP-2).